The sequence spans 389 residues: Rhizopuspepsin-1 (389 aa).

An N-terminal signal peptide occupies residues 1-21; sequence MKFTLISSCVALAAMTLAVEA. Positions 22–66 are cleaved as a propeptide — activation peptide; sequence APNGKKINIPLAKNNSYKPSAKNALNKALAKYNRRKVGSGGITTE. The Peptidase A1 domain occupies 82–385; it reads YYGEVTVGTP…NQEVPEVQIA (304 aa). Asp-100 is a catalytic residue. Residues Cys-113 and Cys-116 are joined by a disulfide bond. Asp-283 is a catalytic residue. Cys-317 and Cys-350 are joined by a disulfide.

The protein belongs to the peptidase A1 family.

The catalysed reaction is Hydrolysis of proteins with broad specificity similar to that of pepsin A, preferring hydrophobic residues at P1 and P1'. Clots milk and activates trypsinogen. Does not cleave 4-Gln-|-His-5, but does cleave 10-His-|-Leu-11 and 12-Val-|-Glu-13 in B chain of insulin.. The sequence is that of Rhizopuspepsin-1 (RNAP) from Rhizopus niveus.